A 367-amino-acid polypeptide reads, in one-letter code: tRNA-specific 2-thiouridylase MnmA (367 aa).

Residues 24–31 and leucine 50 each bind ATP; that span reads AMSGGVDS. The active-site Nucleophile is cysteine 115. Cysteines 115 and 211 form a disulfide. Glycine 139 contributes to the ATP binding site. Residues 161–163 form an interaction with tRNA region; it reads KDQ. Cysteine 211 functions as the Cysteine persulfide intermediate in the catalytic mechanism.

This sequence belongs to the MnmA/TRMU family.

The protein localises to the cytoplasm. It catalyses the reaction S-sulfanyl-L-cysteinyl-[protein] + uridine(34) in tRNA + AH2 + ATP = 2-thiouridine(34) in tRNA + L-cysteinyl-[protein] + A + AMP + diphosphate + H(+). Catalyzes the 2-thiolation of uridine at the wobble position (U34) of tRNA, leading to the formation of s(2)U34. The sequence is that of tRNA-specific 2-thiouridylase MnmA from Ehrlichia canis (strain Jake).